The sequence spans 221 residues: Deoxyribose-phosphate aldolase (221 aa).

Aspartate 90 acts as the Proton donor/acceptor in catalysis. Lysine 152 functions as the Schiff-base intermediate with acetaldehyde in the catalytic mechanism. Residue lysine 181 is the Proton donor/acceptor of the active site.

The protein belongs to the DeoC/FbaB aldolase family. DeoC type 1 subfamily.

It localises to the cytoplasm. It carries out the reaction 2-deoxy-D-ribose 5-phosphate = D-glyceraldehyde 3-phosphate + acetaldehyde. Its pathway is carbohydrate degradation; 2-deoxy-D-ribose 1-phosphate degradation; D-glyceraldehyde 3-phosphate and acetaldehyde from 2-deoxy-alpha-D-ribose 1-phosphate: step 2/2. Its function is as follows. Catalyzes a reversible aldol reaction between acetaldehyde and D-glyceraldehyde 3-phosphate to generate 2-deoxy-D-ribose 5-phosphate. In Syntrophotalea carbinolica (strain DSM 2380 / NBRC 103641 / GraBd1) (Pelobacter carbinolicus), this protein is Deoxyribose-phosphate aldolase.